Consider the following 779-residue polypeptide: Acyl-homoserine lactone acylase PvdQ (779 aa).

The first 25 residues, 1 to 25 (MIISRPLCSFVFAGLSFAVILPAQA), serve as a signal peptide directing secretion. Positions 202–223 (AQQAQALQLAAARNQRFALERG) are cleaved as a propeptide — spacer peptide. Catalysis depends on S224, which acts as the Nucleophile. The segment covering 731-746 (ESSNPQSAHSSDQTEA) has biased composition (polar residues). Residues 731–750 (ESSNPQSAHSSDQTEAFSKK) are disordered.

The protein belongs to the peptidase S45 family. As to quaternary structure, heterodimer of an alpha subunit and a beta subunit processed from the same precursor.

The protein resides in the periplasm. It carries out the reaction an N-acyl-L-homoserine lactone + H2O = L-homoserine lactone + a carboxylate. Its function is as follows. Catalyzes the deacylation of acyl-homoserine lactone (AHL or acyl-HSL), releasing homoserine lactone (HSL) and the corresponding fatty acid. Possesses a specificity for the degradation of long-chain acyl-HSLs (side chains of 11 to 14 carbons in length). This chain is Acyl-homoserine lactone acylase PvdQ (pvdQ), found in Pseudomonas syringae pv. syringae (strain B728a).